Reading from the N-terminus, the 89-residue chain is Strongylocin 2 (89 aa).

The N-terminal stretch at 1 to 22 (MNIRTASFTFIVVMMILSQTMA) is a signal peptide. The propeptide occupies 23 to 38 (DRFFNEPEEDDHLVES). The residue at position 39 (Trp-39) is a 6'-bromotryptophan.

In terms of processing, contains 3 disulfide bonds.

Functionally, has antimicrobial activity against Gram-negative bacteria and Gram-positive bacteria with minimum inhibitory concentration (MIC) between 0.78 uM and 3.13 uM. This Echinus esculentus (Sea urchin) protein is Strongylocin 2.